A 583-amino-acid chain; its full sequence is Torsin-1A-interacting protein 1 (583 aa).

Over residues 1-12 (MAGDGRRAEAVR) the composition is skewed to basic and acidic residues. Disordered regions lie at residues 1–254 (MAGD…RSSS) and 271–293 (AHDK…WAPQ). Over 1–338 (MAGDGRRAEA…NASFVKRNRW (338 aa)) the chain is Nuclear. A Phosphoserine modification is found at Ser-60. 2 stretches are compositionally biased toward basic and acidic residues: residues 74 to 101 (VAKE…EVRE) and 115 to 124 (RPQETEEMKT). 2 positions are modified to phosphoserine: Ser-135 and Ser-143. Met-146 is modified (methionine sulfoxide). Phosphoserine occurs at positions 154, 156, and 157. Residues 165-174 (QTDLSQTISK) show a composition bias toward polar residues. 2 positions are modified to phosphoserine: Ser-186 and Ser-215. A compositionally biased stretch (acidic residues) spans 216 to 225 (EEGETEEDDQ). Thr-220 carries the phosphothreonine modification. Residues Ser-227, Ser-230, and Ser-242 each carry the phosphoserine modification. Residues 238–250 (RSRDSDESGDKTT) show a composition bias toward basic and acidic residues. A compositionally biased stretch (polar residues) spans 277-287 (SVLSSGYQKTP). The residue at position 301 (Met-301) is a Methionine sulfoxide. Ser-305 is modified (phosphoserine). Residue Lys-308 forms a Glycyl lysine isopeptide (Lys-Gly) (interchain with G-Cter in SUMO2) linkage. Ser-309 and Ser-315 each carry phosphoserine. The tract at residues 309–328 (SELGNQSPSTSSRQVTGQPQ) is disordered. Residues 339–355 (WLLPLIAALASGSFWFF) traverse the membrane as a helical segment. Residues 356–583 (STPEVETTAV…ENALKRGICL (228 aa)) are Perinuclear space-facing. Residues 356-583 (STPEVETTAV…ENALKRGICL (228 aa)) are interaction with TOR1A. Positions 359-435 (EVETTAVQEF…SEQIADAYSS (77 aa)) form a coiled coil. N-linked (GlcNAc...) asparagine glycosylation occurs at Asn-399. The residue at position 552 (Met-552) is a Methionine sulfoxide.

It belongs to the TOR1AIP family. As to quaternary structure, interacts with ATP1B4. Interacts with TOR1A (ATP-bound). Interacts with TOR1B, TOR2A and TOR3A. Interacts with VIM. Phosphorylated. Dephosphorylated at Ser-309 and Ser-315 by serine/threonine-protein phosphatase PP1. Expressed in muscle, liver and kidney. As to expression, major isoform present in liver, brain and heart (at protein level). Expressed at lower levels than isoform 4 in lung, kidney and spleen (at protein level). Similar levels of isoforms 1 and 4 are observed in ovary, testis and pancreas (at protein level). In terms of tissue distribution, expressed at higher levels than isoform 1 in lung, kidney and spleen (at protein level). Expressed at lower levels than isoform 1 in liver, brain and heart (at protein level). Similar levels of isoforms 1 and 4 are observed in ovary, testis and pancreas (at protein level).

It is found in the nucleus inner membrane. The protein resides in the nucleus envelope. The protein localises to the nucleus. Required for nuclear membrane integrity. Induces TOR1A and TOR1B ATPase activity and is required for their location on the nuclear membrane. Binds to A- and B-type lamins. Possible role in membrane attachment and assembly of the nuclear lamina. The polypeptide is Torsin-1A-interacting protein 1 (TOR1AIP1) (Homo sapiens (Human)).